A 324-amino-acid polypeptide reads, in one-letter code: Acetyl-coenzyme A carboxylase carboxyl transferase subunit beta (324 aa).

The segment covering 1–16 (MTKNNNDLSNSSSNPP) has biased composition (low complexity). Positions 1–51 (MTKNNNDLSNSSSNPPSNRPVAGKEAELEIQRETHAAQSGQSESWLSRPIP) are disordered. Over residues 22–35 (AGKEAELEIQRETH) the composition is skewed to basic and acidic residues. A compositionally biased stretch (polar residues) spans 36 to 45 (AAQSGQSESW). A CoA carboxyltransferase N-terminal domain is found at 68–324 (PSTECPQCHS…YRLLAKLTHV (257 aa)). The Zn(2+) site is built by cysteine 72, cysteine 75, cysteine 91, and cysteine 94. The C4-type zinc finger occupies 72 to 94 (CPQCHSMITNTALIFNAYVCPHC).

The protein belongs to the AccD/PCCB family. As to quaternary structure, acetyl-CoA carboxylase is a heterohexamer composed of biotin carboxyl carrier protein (AccB), biotin carboxylase (AccC) and two subunits each of ACCase subunit alpha (AccA) and ACCase subunit beta (AccD). The cofactor is Zn(2+).

It localises to the cytoplasm. It catalyses the reaction N(6)-carboxybiotinyl-L-lysyl-[protein] + acetyl-CoA = N(6)-biotinyl-L-lysyl-[protein] + malonyl-CoA. It participates in lipid metabolism; malonyl-CoA biosynthesis; malonyl-CoA from acetyl-CoA: step 1/1. Component of the acetyl coenzyme A carboxylase (ACC) complex. Biotin carboxylase (BC) catalyzes the carboxylation of biotin on its carrier protein (BCCP) and then the CO(2) group is transferred by the transcarboxylase to acetyl-CoA to form malonyl-CoA. The protein is Acetyl-coenzyme A carboxylase carboxyl transferase subunit beta of Psychrobacter sp. (strain PRwf-1).